The sequence spans 958 residues: Glycine dehydrogenase (decarboxylating) (958 aa).

At Lys705 the chain carries N6-(pyridoxal phosphate)lysine.

This sequence belongs to the GcvP family. In terms of assembly, the glycine cleavage system is composed of four proteins: P, T, L and H. It depends on pyridoxal 5'-phosphate as a cofactor.

It catalyses the reaction N(6)-[(R)-lipoyl]-L-lysyl-[glycine-cleavage complex H protein] + glycine + H(+) = N(6)-[(R)-S(8)-aminomethyldihydrolipoyl]-L-lysyl-[glycine-cleavage complex H protein] + CO2. In terms of biological role, the glycine cleavage system catalyzes the degradation of glycine. The P protein binds the alpha-amino group of glycine through its pyridoxal phosphate cofactor; CO(2) is released and the remaining methylamine moiety is then transferred to the lipoamide cofactor of the H protein. In Synechococcus sp. (strain CC9902), this protein is Glycine dehydrogenase (decarboxylating).